Consider the following 463-residue polypeptide: Glutamate--tRNA ligase 2 (463 aa).

The 'HIGH' region motif lies at 10–20 (PSPTGFLHIGS). The short motif at 239–243 (KLSKR) is the 'KMSKS' region element. Lysine 242 contributes to the ATP binding site.

Belongs to the class-I aminoacyl-tRNA synthetase family. Glutamate--tRNA ligase type 1 subfamily. In terms of assembly, monomer.

The protein localises to the cytoplasm. The catalysed reaction is tRNA(Glu) + L-glutamate + ATP = L-glutamyl-tRNA(Glu) + AMP + diphosphate. Its function is as follows. Catalyzes the attachment of glutamate to tRNA(Glu) in a two-step reaction: glutamate is first activated by ATP to form Glu-AMP and then transferred to the acceptor end of tRNA(Glu). This Rickettsia felis (strain ATCC VR-1525 / URRWXCal2) (Rickettsia azadi) protein is Glutamate--tRNA ligase 2.